We begin with the raw amino-acid sequence, 472 residues long: Coronin-6 (472 aa).

5 WD repeats span residues 79–119, 129–169, 173–212, 216–259, and 264–304; these read GHTG…PVRN, GHSK…VLLS, IHPD…VVAE, AHEG…EPVA, and DTSN…PFVH. Positions 409-434 are disordered; sequence NILDVRPPASPRRSQSASEAPLSQQH. The segment covering 419-429 has biased composition (low complexity); it reads PRRSQSASEAP. Positions 430–469 form a coiled coil; sequence LSQQHTLETLLEEMKALRERVQAQEERITALENMLCELVD.

This chain is Coronin-6 (Coro6), found in Rattus norvegicus (Rat).